The following is a 224-amino-acid chain: uncharacterized protein (224 aa).

This is an uncharacterized protein from Acanthamoeba polyphaga mimivirus (APMV).